A 250-amino-acid chain; its full sequence is 2-(R)-hydroxypropyl-CoM dehydrogenase (250 aa).

NAD(+) is bound by residues 12–14 (SGN), D33, 60–61 (DV), and N87. R152 contributes to the 2-oxopropyl-coenzyme M binding site. Y155 acts as the Proton acceptor in catalysis. 188-192 (IETPM) provides a ligand contact to NAD(+). 2-oxopropyl-coenzyme M is bound at residue 195–196 (WR).

This sequence belongs to the short-chain dehydrogenases/reductases (SDR) family. As to quaternary structure, homodimer in solution. Homotetramer. Component III of the aliphatic epoxide carboxylation complex together with components I, II and IV.

The catalysed reaction is (R)-2-hydroxypropyl-coenzyme M + NAD(+) = 2-oxopropyl-coenzyme M + NADH + H(+). It functions in the pathway alkene metabolism; propylene degradation. Its activity is regulated as follows. Inhibited by the arginine-specific modifiers 2,3-butanedione and phenylglyoxal. 2-(2-methyl-2-hydroxypropylthio)ethanesulfonate (M-HPC), an achiral analog of both R-HPC and S-HPC, and (2S)-2-hydroxypropyl-coenzyme M (S-HPC) are competitive inhibitors. Inhibited (at 70%) by the coenzyme M analog 2-bromoethanesulfonate (BES). In terms of biological role, involved in aliphatic epoxide carboxylation. Catalyzes the reversible oxidation of (R)-2-hydroxypropyl-coenzyme M (R-HPC) to 2-oxopropyl-coenzyme M (2-KPC). The enzyme is highly specific for the R enantiomers. In vitro can also use achiral 2-propanol and short-chain (R)- and (S)-2-alkanols. This is 2-(R)-hydroxypropyl-CoM dehydrogenase from Xanthobacter autotrophicus (strain ATCC BAA-1158 / Py2).